Consider the following 846-residue polypeptide: MVAPGRMVTSSRRIGRVTNKTKLIIYRGSDKVDTSAAETVLWDQEAGGAGKDSNKHQHIGATGVESGELLEHHLQAALSSASLLHSSNKPSSPKSVKEAPAAALNYHIPTPDATGLVSDTVFSQLYQRTKYVEPYNFIRFSDTVEESSCGWGGLGYCMDDADERWLNDFNSKAEGSSGDVKSDKEQGRGMRVKGKDREKEKGDAPAPLVISEDMFEYIMGVFEKYTEENAPMLHTDLSLLPPFSAVENMFSTPISPAFLPSNEIPKELGDLKACARMARNVYPHWKSRREQRQGKSILPQLNYDETNDNDPYVCFRRRDIRATRKTRRTDNFSIEQFQKLQFELRSAHALADRVLTREREKKSLYEAEKELWEARWKFFETKRRWPSLGMTSDEEHKITGRPTIVPPIQIPSLSGQTPLTSGQSSSHMRKRTDKDREERAQRERYDAQRNAERSGILSGRSNAPDALKERLQALQQKTEEMLARKKEQDAHWDDSIDSPYQPLPPSNSVHAFRSLFVLDPCRAQCKDSETGNEILHPESFRIRRGRGGIVRLDRRTSIYSHRRGIQPTSPSEYPTWLFPDIAPRRSEKKRPRSIDEVEEEMQEQSPKVMRKDLNETWRYDVDRGGAVGVGMGLEEDYDRVIIDDLEAKYIRHRISLLQESDCAKLRPDNYILDQTREALDAAADAKPPPAPIFQKPPAPQPNPQLLAAHLQQQQMLAQQQQMEQFQRFQLMAQQQAMAQAQAQAQAQAQAQAQAQAQAQVQAQGQGHPQAHLQTHPQGVPQPNGVNSPMPNGQQMLPPSDGVKQLKLPPHAVARLGAAMANANANANGGLHVLQQQQQQHAQTSQQ.

Disordered regions lie at residues 169 to 204 (FNSK…KGDA), 391 to 466 (TSDE…APDA), 587 to 607 (EKKR…QSPK), 682 to 702 (AADA…PQPN), and 759 to 804 (QVQA…GVKQ). The segment covering 180–203 (VKSDKEQGRGMRVKGKDREKEKGD) has biased composition (basic and acidic residues). Over residues 411 to 426 (PSLSGQTPLTSGQSSS) the composition is skewed to polar residues. Residues 432 to 452 (TDKDREERAQRERYDAQRNAE) are compositionally biased toward basic and acidic residues. Residues 434–490 (KDREERAQRERYDAQRNAERSGILSGRSNAPDALKERLQALQQKTEEMLARKKEQDA) are a coiled coil. Residues 686–702 (KPPPAPIFQKPPAPQPN) show a composition bias toward pro residues. A compositionally biased stretch (low complexity) spans 759–773 (QVQAQGQGHPQAHLQ). The span at 783–796 (NGVNSPMPNGQQML) shows a compositional bias: polar residues.

It belongs to the enhancer of polycomb family. As to quaternary structure, component of the NuA4 histone acetyltransferase complex.

The protein localises to the nucleus. Its function is as follows. Component of the NuA4 histone acetyltransferase complex which is involved in transcriptional activation of selected genes principally by acetylation of nucleosomal histone H4 and H2A. The NuA4 complex is also involved in DNA repair. Involved in gene silencing by neighboring heterochromatin, blockage of the silencing spreading along the chromosome, and required for cell cycle progression through G2/M. The protein is Enhancer of polycomb-like protein 1 (EPL1) of Cryptococcus neoformans var. neoformans serotype D (strain JEC21 / ATCC MYA-565) (Filobasidiella neoformans).